Here is a 213-residue protein sequence, read N- to C-terminus: MVFIAVFNGVFAMSSLPGTVLGIKAVNGVVIAGEKRLTYDGYVLSKNTRKVHPITKHVGIGFAGLVGDAQFIIRALRMEAENYELQLGREIRVRGLAKILSLILYSYKLAPLMTEVVVGGFDEKGPQIYVLDPVGSLIEDKYVALGSGGPIALGIIEKEYREDIDVDEAEKLAVSAIREAIERDAVSGDGVDVLRITEEGYSLREYMFRRETS.

A propeptide spans 1–18 (MVFIAVFNGVFAMSSLPG) (removed in mature form; by autocatalysis). The active-site Nucleophile is the threonine 19.

It belongs to the peptidase T1B family. As to quaternary structure, the 20S proteasome core is composed of 14 alpha and 14 beta subunits that assemble into four stacked heptameric rings, resulting in a barrel-shaped structure. The two inner rings, each composed of seven catalytic beta subunits, are sandwiched by two outer rings, each composed of seven alpha subunits. The catalytic chamber with the active sites is on the inside of the barrel. Has a gated structure, the ends of the cylinder being occluded by the N-termini of the alpha-subunits. Is capped at one or both ends by the proteasome regulatory ATPase, PAN.

The protein localises to the cytoplasm. The catalysed reaction is Cleavage of peptide bonds with very broad specificity.. The formation of the proteasomal ATPase PAN-20S proteasome complex, via the docking of the C-termini of PAN into the intersubunit pockets in the alpha-rings, triggers opening of the gate for substrate entry. Interconversion between the open-gate and close-gate conformations leads to a dynamic regulation of the 20S proteasome proteolysis activity. Its function is as follows. Component of the proteasome core, a large protease complex with broad specificity involved in protein degradation. The protein is Proteasome subunit beta 1 of Staphylothermus marinus (strain ATCC 43588 / DSM 3639 / JCM 9404 / F1).